A 301-amino-acid polypeptide reads, in one-letter code: Probable alpha-L-glutamate ligase (301 aa).

Residues 104–287 enclose the ATP-grasp domain; it reads LQLLARKGVG…VAGMIINWTE (184 aa). ATP-binding positions include Lys141, 178 to 179, Asp187, and 211 to 213; these read EF and RSN. The Mg(2+) site is built by Asp248, Glu260, and Asn262. 3 residues coordinate Mn(2+): Asp248, Glu260, and Asn262.

The protein belongs to the RimK family. Requires Mg(2+) as cofactor. It depends on Mn(2+) as a cofactor.

In Marinobacter nauticus (strain ATCC 700491 / DSM 11845 / VT8) (Marinobacter aquaeolei), this protein is Probable alpha-L-glutamate ligase.